Consider the following 130-residue polypeptide: Small ribosomal subunit protein uS8 (130 aa).

The protein belongs to the universal ribosomal protein uS8 family. Part of the 30S ribosomal subunit. Contacts proteins S5 and S12.

In terms of biological role, one of the primary rRNA binding proteins, it binds directly to 16S rRNA central domain where it helps coordinate assembly of the platform of the 30S subunit. This chain is Small ribosomal subunit protein uS8, found in Actinobacillus pleuropneumoniae serotype 5b (strain L20).